Here is a 135-residue protein sequence, read N- to C-terminus: Meiotically up-regulated gene 116 protein (135 aa).

The helical transmembrane segment at 20-39 (YFHSFHCFFLLCFTVMLCVV) threads the bilayer. Positions 81-101 (QTPTKKGNKTKKKRKKEKKKE) are disordered. Positions 86–98 (KGNKTKKKRKKEK) are enriched in basic residues.

Its subcellular location is the mitochondrion membrane. Functionally, has a role in meiosis. This chain is Meiotically up-regulated gene 116 protein (mug116), found in Schizosaccharomyces pombe (strain 972 / ATCC 24843) (Fission yeast).